Here is a 256-residue protein sequence, read N- to C-terminus: UPF0280 protein MTH_727 (256 aa).

This sequence belongs to the UPF0280 family.

This chain is UPF0280 protein MTH_727, found in Methanothermobacter thermautotrophicus (strain ATCC 29096 / DSM 1053 / JCM 10044 / NBRC 100330 / Delta H) (Methanobacterium thermoautotrophicum).